The sequence spans 308 residues: Glutaminase (308 aa).

The substrate site is built by Ser-66, Asn-117, Glu-161, Asn-168, Tyr-192, Tyr-244, and Val-262.

It belongs to the glutaminase family. In terms of assembly, homotetramer.

It catalyses the reaction L-glutamine + H2O = L-glutamate + NH4(+). The protein is Glutaminase of Salmonella choleraesuis (strain SC-B67).